Reading from the N-terminus, the 702-residue chain is Ferrioxamine B receptor (702 aa).

Residues 1–30 (MPLEMFMFATTRMALLIGGAIGGATFPLFA) form the signal peptide. One can recognise a TBDR plug domain in the interval 55-168 (PDIETPQSVS…PGGIVALTSR (114 aa)). Residues 173–702 (DAGGEVKLFA…SIVGSVSWAF (530 aa)) enclose the TBDR beta-barrel domain.

This sequence belongs to the TonB-dependent receptor family.

The protein resides in the cell outer membrane. In terms of biological role, ferrioxamine binding and uptake, in association with the TonB protein. In Salmonella typhimurium (strain LT2 / SGSC1412 / ATCC 700720), this protein is Ferrioxamine B receptor (foxA).